The sequence spans 85 residues: Large ribosomal subunit protein bL27 (85 aa).

The tract at residues 1-20 (MATKKAGGSTRNGRDSEAKR) is disordered.

Belongs to the bacterial ribosomal protein bL27 family.

The chain is Large ribosomal subunit protein bL27 from Pasteurella multocida (strain Pm70).